A 287-amino-acid polypeptide reads, in one-letter code: Large ribosomal subunit protein uL2 (287 aa).

The segment at 221–287 (RGSVMNPCDH…SKRSRGGRDS (67 aa)) is disordered. The segment covering 258–287 (KTRKRNKPSNRYVLRKRRKTSKRSRGGRDS) has biased composition (basic residues).

This sequence belongs to the universal ribosomal protein uL2 family. In terms of assembly, part of the 50S ribosomal subunit. Forms a bridge to the 30S subunit in the 70S ribosome.

Functionally, one of the primary rRNA binding proteins. Required for association of the 30S and 50S subunits to form the 70S ribosome, for tRNA binding and peptide bond formation. It has been suggested to have peptidyltransferase activity; this is somewhat controversial. Makes several contacts with the 16S rRNA in the 70S ribosome. The protein is Large ribosomal subunit protein uL2 of Parasynechococcus marenigrum (strain WH8102).